The chain runs to 394 residues: Acetate kinase (394 aa).

A Mg(2+)-binding site is contributed by Asn10. An ATP-binding site is contributed by Lys17. Arg87 is a binding site for substrate. Asp144 serves as the catalytic Proton donor/acceptor. Residues 204–208 (HLGNG), 279–281 (DMR), and 327–331 (GIGEN) each bind ATP. Glu381 lines the Mg(2+) pocket.

This sequence belongs to the acetokinase family. As to quaternary structure, homodimer. Mg(2+) serves as cofactor. Mn(2+) is required as a cofactor.

It is found in the cytoplasm. The catalysed reaction is acetate + ATP = acetyl phosphate + ADP. It participates in metabolic intermediate biosynthesis; acetyl-CoA biosynthesis; acetyl-CoA from acetate: step 1/2. Its function is as follows. Catalyzes the formation of acetyl phosphate from acetate and ATP. Can also catalyze the reverse reaction. The sequence is that of Acetate kinase from Pseudomonas aeruginosa (strain LESB58).